The sequence spans 118 residues: Holin-like protein CidA 2 (118 aa).

4 helical membrane-spanning segments follow: residues Val4–Val26, Gly33–Leu52, Leu62–Leu84, and Ile91–Leu113.

It belongs to the CidA/LrgA family. CidA subfamily.

Its subcellular location is the cell membrane. Increases the activity of extracellular murein hydrolases possibly by mediating their export via hole formation. Inhibited by the antiholin-like proteins LrgAB. In an unstressed cell, the LrgAB products probably inhibit the function of the CidA protein. When a cell is stressed by the addition of antibiotics or by other factors in the environment, CidA possibly oligomerizes within the bacterial cell membrane, creating lesions that disrupt the proton motive force, which in turn results in loss of cell viability. These lesions are also hypothesized to regulate the subsequent cell lysis by either allowing the murein hydrolases access to the cell wall substrate and/or regulating their activity by a possible change in the cell wall pH that results from loss of membrane potential. In Bacillus cereus (strain ATCC 14579 / DSM 31 / CCUG 7414 / JCM 2152 / NBRC 15305 / NCIMB 9373 / NCTC 2599 / NRRL B-3711), this protein is Holin-like protein CidA 2 (cidA2).